The primary structure comprises 106 residues: UPF0213 protein KPN78578_35340 (106 aa).

Residues 13–88 form the GIY-YIG domain; the sequence is VCWFLYLIRT…KQLTKREKER (76 aa).

This sequence belongs to the UPF0213 family.

This Klebsiella pneumoniae subsp. pneumoniae (strain ATCC 700721 / MGH 78578) protein is UPF0213 protein KPN78578_35340.